A 1594-amino-acid chain; its full sequence is Mediator of RNA polymerase II transcription subunit 12 (1594 aa).

2 disordered regions span residues 1–116 and 1499–1532; these read MIPH…LSWR and PSPA…TPAV. 2 stretches are compositionally biased toward low complexity: residues 81 to 93 and 1499 to 1521; these read PAAP…SPAP and PSPA…GAPS.

This sequence belongs to the Mediator complex subunit 12 family. As to quaternary structure, component of the srb8-11 complex, which itself associates with the Mediator complex.

Its subcellular location is the nucleus. Functionally, component of the srb8-11 complex. The srb8-11 complex is a regulatory module of the Mediator complex which is itself involved in regulation of basal and activated RNA polymerase II-dependent transcription. The srb8-11 complex may be involved in the transcriptional repression of a subset of genes regulated by Mediator. It may inhibit the association of the Mediator complex with RNA polymerase II to form the holoenzyme complex. This is Mediator of RNA polymerase II transcription subunit 12 (srb8) from Aspergillus oryzae (strain ATCC 42149 / RIB 40) (Yellow koji mold).